The chain runs to 352 residues: Glycerol-3-phosphate dehydrogenase 1-like protein (352 aa).

13 to 18 (GSGNWG) contributes to the NAD(+) binding site. K123 contacts substrate. A156 contacts NAD(+). The active-site Proton acceptor is K207. Residues R272, K299, and Q301 each coordinate NAD(+). Position 272-273 (272-273 (RN)) interacts with substrate.

The protein belongs to the NAD-dependent glycerol-3-phosphate dehydrogenase family.

It is found in the cytoplasm. The enzyme catalyses sn-glycerol 3-phosphate + NAD(+) = dihydroxyacetone phosphate + NADH + H(+). Plays a role in regulating cardiac sodium current. The sequence is that of Glycerol-3-phosphate dehydrogenase 1-like protein (gpd1l) from Xenopus tropicalis (Western clawed frog).